The chain runs to 500 residues: Probable malate:quinone oxidoreductase (500 aa).

It belongs to the MQO family. It depends on FAD as a cofactor.

It carries out the reaction (S)-malate + a quinone = a quinol + oxaloacetate. Its pathway is carbohydrate metabolism; tricarboxylic acid cycle; oxaloacetate from (S)-malate (quinone route): step 1/1. The protein is Probable malate:quinone oxidoreductase of Bacillus cereus (strain B4264).